Consider the following 206-residue polypeptide: MKTTLILASTSPYRQQLLQKLTPNFTCVSPEVDETPLADETAQALVVRLAQAKAIAGAERYLAELGLSNLHTAAEALVIGSDQVAVIDGAIIGKPLTQANAINQLQQASGKAITFYTGLAVYNSHSHKMTCEIVPFTVHFRTLSLAQITYYVETELPLYCAGSFKSEGLGIALFERLEGDDPNTLIGLPLIALIDMLAEHGETVLS.

Aspartate 82 functions as the Proton acceptor in the catalytic mechanism.

It belongs to the Maf family. YceF subfamily. It depends on a divalent metal cation as a cofactor.

The protein localises to the cytoplasm. It carries out the reaction N(7)-methyl-GTP + H2O = N(7)-methyl-GMP + diphosphate + H(+). Nucleoside triphosphate pyrophosphatase that hydrolyzes 7-methyl-GTP (m(7)GTP). May have a dual role in cell division arrest and in preventing the incorporation of modified nucleotides into cellular nucleic acids. This chain is 7-methyl-GTP pyrophosphatase, found in Shewanella denitrificans (strain OS217 / ATCC BAA-1090 / DSM 15013).